Consider the following 350-residue polypeptide: Phospho-2-dehydro-3-deoxyheptonate aldolase, Phe-sensitive (350 aa).

Position 244 is an N6-acetyllysine (lysine 244).

This sequence belongs to the class-I DAHP synthase family. Homotetramer.

The enzyme catalyses D-erythrose 4-phosphate + phosphoenolpyruvate + H2O = 7-phospho-2-dehydro-3-deoxy-D-arabino-heptonate + phosphate. The protein operates within metabolic intermediate biosynthesis; chorismate biosynthesis; chorismate from D-erythrose 4-phosphate and phosphoenolpyruvate: step 1/7. Its function is as follows. Stereospecific condensation of phosphoenolpyruvate (PEP) and D-erythrose-4-phosphate (E4P) giving rise to 3-deoxy-D-arabino-heptulosonate-7-phosphate (DAHP). This chain is Phospho-2-dehydro-3-deoxyheptonate aldolase, Phe-sensitive (aroG), found in Escherichia coli O157:H7.